The primary structure comprises 92 residues: Small ribosomal subunit protein uS19 (92 aa).

The protein belongs to the universal ribosomal protein uS19 family.

In terms of biological role, protein S19 forms a complex with S13 that binds strongly to the 16S ribosomal RNA. This chain is Small ribosomal subunit protein uS19, found in Bacillus licheniformis (strain ATCC 14580 / DSM 13 / JCM 2505 / CCUG 7422 / NBRC 12200 / NCIMB 9375 / NCTC 10341 / NRRL NRS-1264 / Gibson 46).